A 116-amino-acid polypeptide reads, in one-letter code: Iron-sulfur cluster insertion protein ErpA (116 aa).

The iron-sulfur cluster site is built by Cys-44, Cys-108, and Cys-110.

Belongs to the HesB/IscA family. Homodimer. It depends on iron-sulfur cluster as a cofactor.

Required for insertion of 4Fe-4S clusters for at least IspG. This is Iron-sulfur cluster insertion protein ErpA from Pseudomonas aeruginosa (strain LESB58).